The chain runs to 243 residues: UDP-2,3-diacylglucosamine hydrolase (243 aa).

5 residues coordinate Mn(2+): Asp-9, His-11, Asp-42, Asn-79, and His-114. Asn-79–Arg-80 provides a ligand contact to substrate. Substrate contacts are provided by Asp-122, Ser-160, Asn-164, and His-195. 2 residues coordinate Mn(2+): His-195 and His-197.

This sequence belongs to the LpxH family. Mn(2+) is required as a cofactor.

Its subcellular location is the cell inner membrane. The enzyme catalyses UDP-2-N,3-O-bis[(3R)-3-hydroxytetradecanoyl]-alpha-D-glucosamine + H2O = 2-N,3-O-bis[(3R)-3-hydroxytetradecanoyl]-alpha-D-glucosaminyl 1-phosphate + UMP + 2 H(+). It functions in the pathway glycolipid biosynthesis; lipid IV(A) biosynthesis; lipid IV(A) from (3R)-3-hydroxytetradecanoyl-[acyl-carrier-protein] and UDP-N-acetyl-alpha-D-glucosamine: step 4/6. In terms of biological role, hydrolyzes the pyrophosphate bond of UDP-2,3-diacylglucosamine to yield 2,3-diacylglucosamine 1-phosphate (lipid X) and UMP by catalyzing the attack of water at the alpha-P atom. Involved in the biosynthesis of lipid A, a phosphorylated glycolipid that anchors the lipopolysaccharide to the outer membrane of the cell. The chain is UDP-2,3-diacylglucosamine hydrolase from Coxiella burnetii (strain Dugway 5J108-111).